A 226-amino-acid polypeptide reads, in one-letter code: Large ribosomal subunit protein uL1 (226 aa).

This sequence belongs to the universal ribosomal protein uL1 family. Part of the 50S ribosomal subunit.

Binds directly to 23S rRNA. The L1 stalk is quite mobile in the ribosome, and is involved in E site tRNA release. In terms of biological role, protein L1 is also a translational repressor protein, it controls the translation of the L11 operon by binding to its mRNA. This chain is Large ribosomal subunit protein uL1, found in Selenomonas ruminantium.